The chain runs to 359 residues: Membrane-bound lytic murein transglycosylase C (359 aa).

Positions 1–16 (MKKYLALALIAPLLIS) are cleaved as a signal peptide. Residue Cys-17 is the site of N-palmitoyl cysteine attachment. The S-diacylglycerol cysteine moiety is linked to residue Cys-17.

It belongs to the transglycosylase Slt family.

The protein resides in the cell outer membrane. It carries out the reaction Exolytic cleavage of the (1-&gt;4)-beta-glycosidic linkage between N-acetylmuramic acid (MurNAc) and N-acetylglucosamine (GlcNAc) residues in peptidoglycan, from either the reducing or the non-reducing ends of the peptidoglycan chains, with concomitant formation of a 1,6-anhydrobond in the MurNAc residue.. Murein-degrading enzyme. May play a role in recycling of muropeptides during cell elongation and/or cell division. The protein is Membrane-bound lytic murein transglycosylase C of Escherichia coli O139:H28 (strain E24377A / ETEC).